The sequence spans 210 residues: Stress-response A/B barrel domain-containing protein DABB1 (210 aa).

Stress-response A/B barrel domains follow at residues 5 to 100 (VEHV…AVDW) and 116 to 204 (IGKI…VVEF).

Homodimer.

The protein localises to the cytoplasm. It is found in the cytosol. Functionally, involved in defense against fungal pathogens. Possesses antifungal activity against diverse pathogenic fungi. In Arabidopsis thaliana (Mouse-ear cress), this protein is Stress-response A/B barrel domain-containing protein DABB1.